The sequence spans 345 residues: Biotin synthase (345 aa).

The Radical SAM core domain occupies 38 to 256 (RQVQVSTLLS…IAVARIMMPS (219 aa)). [4Fe-4S] cluster is bound by residues Cys53, Cys57, and Cys60. Residues Cys97, Cys128, Cys188, and Arg260 each contribute to the [2Fe-2S] cluster site.

It belongs to the radical SAM superfamily. Biotin synthase family. As to quaternary structure, homodimer. [4Fe-4S] cluster serves as cofactor. The cofactor is [2Fe-2S] cluster.

It catalyses the reaction (4R,5S)-dethiobiotin + (sulfur carrier)-SH + 2 reduced [2Fe-2S]-[ferredoxin] + 2 S-adenosyl-L-methionine = (sulfur carrier)-H + biotin + 2 5'-deoxyadenosine + 2 L-methionine + 2 oxidized [2Fe-2S]-[ferredoxin]. It functions in the pathway cofactor biosynthesis; biotin biosynthesis; biotin from 7,8-diaminononanoate: step 2/2. Its function is as follows. Catalyzes the conversion of dethiobiotin (DTB) to biotin by the insertion of a sulfur atom into dethiobiotin via a radical-based mechanism. The sequence is that of Biotin synthase from Yersinia pseudotuberculosis serotype O:1b (strain IP 31758).